Reading from the N-terminus, the 367-residue chain is C-X-C chemokine receptor type 3 (367 aa).

At 1-56 the chain is on the extracellular side; the sequence is MYLEVSERQVLDASDIAFLLENSTSPYDYGENESDFSDSPPCPQDFSLNFDRTFLP. N-linked (GlcNAc...) asparagine glycosylation occurs at N22. Sulfotyrosine is present on residues Y27 and Y29. N-linked (GlcNAc...) asparagine glycosylation is present at N32. A helical transmembrane segment spans residues 57 to 77; sequence VLYSLLFLLGLLGNGAVAAVL. Over 78–89 the chain is Cytoplasmic; that stretch reads LSQRTALSSTDT. A helical transmembrane segment spans residues 90 to 110; the sequence is FLLHLAVADVLLVLTLPLWAV. The Extracellular portion of the chain corresponds to 111 to 125; it reads DAAAQWVFGSGLCKV. A disulfide bridge links C123 with C202. A helical transmembrane segment spans residues 126–146; sequence AGALFNINFYAGAFLLACISF. At 147–168 the chain is on the cytoplasmic side; the sequence is DRYLSIVHATQIYRRDPWVRVA. Residues 169 to 189 traverse the membrane as a helical segment; the sequence is LTCIVVWGLCVLFALPDFIFL. At 190 to 222 the chain is on the extracellular side; it reads SASHDQRLNATHCQYNFPQVGRTALRVLQLVAG. N-linked (GlcNAc...) asparagine glycosylation occurs at N198. The chain crosses the membrane as a helical span at residues 223-243; the sequence is FLMPLLVMAYCYAHILAVLLV. The Cytoplasmic portion of the chain corresponds to 244-255; that stretch reads SRGQRRFRAMRL. The chain crosses the membrane as a helical span at residues 256–276; the sequence is VVVVVVAFAVCWTPYHLVVLV. At 277-300 the chain is on the extracellular side; sequence DILMDVGVLARNCGRESHVDVAKS. Residues 301-321 form a helical membrane-spanning segment; the sequence is VTSGMGYMHCCLNPLLYAFVG. Residues 322 to 367 are Cytoplasmic-facing; that stretch reads VKFKEQMWMLLMRLGRSDQRGPQRQPSSSRRESSWSETTEASYLGL. The disordered stretch occupies residues 339–367; the sequence is DQRGPQRQPSSSRRESSWSETTEASYLGL.

It belongs to the G-protein coupled receptor 1 family. As to quaternary structure, homomer. Forms heteromers with ACKR4. Interacts with PF4/CXCL4. Sulfation on Tyr-27 and Tyr-29 is essential for CXCL10 binding. Post-translationally, N-glycosylated.

Its subcellular location is the cell membrane. Functionally, receptor for the C-X-C chemokine CXCL9, CXCL10 and CXCL11 and mediates the proliferation, survival and angiogenic activity of mesangial cells through a heterotrimeric G-protein signaling pathway. Probably promotes cell chemotaxis response. Binds to CCL21. Upon activation by PF4, induces activated T-lymphocytes migration mediated via downstream Ras/extracellular signal-regulated kinase (ERK) signaling. This chain is C-X-C chemokine receptor type 3 (Cxcr3), found in Rattus norvegicus (Rat).